Reading from the N-terminus, the 227-residue chain is H-N-H endonuclease F-TflIV (227 aa).

Functionally, endonuclease that introduces double-strand break into pseudo palindromic 17 bp DNA sequence yielding 1 bp extensions with 3'-overhangs. This chain is H-N-H endonuclease F-TflIV, found in Escherichia phage T5 (Enterobacteria phage T5).